The primary structure comprises 205 residues: Large ribosomal subunit protein uL4 (205 aa).

The tract at residues 56–78 (ISGTTAKPYRQKHTGRARQGSLR) is disordered.

Belongs to the universal ribosomal protein uL4 family. In terms of assembly, part of the 50S ribosomal subunit.

Functionally, one of the primary rRNA binding proteins, this protein initially binds near the 5'-end of the 23S rRNA. It is important during the early stages of 50S assembly. It makes multiple contacts with different domains of the 23S rRNA in the assembled 50S subunit and ribosome. Its function is as follows. Forms part of the polypeptide exit tunnel. This Ehrlichia canis (strain Jake) protein is Large ribosomal subunit protein uL4.